The following is a 62-amino-acid chain: Photosystem II reaction center protein Z (62 aa).

The next 2 helical transmembrane spans lie at 8–28 and 41–61; these read ALLLLVVMSFVLIVGVPVLYA and LVGGLAWTALVVLVGVLNYFV.

It belongs to the PsbZ family. In terms of assembly, PSII is composed of 1 copy each of membrane proteins PsbA, PsbB, PsbC, PsbD, PsbE, PsbF, PsbH, PsbI, PsbJ, PsbK, PsbL, PsbM, PsbT, PsbX, PsbY, PsbZ, Psb30/Ycf12, peripheral proteins PsbO, CyanoQ (PsbQ), PsbU, PsbV and a large number of cofactors. It forms dimeric complexes.

The protein resides in the cellular thylakoid membrane. Its function is as follows. May control the interaction of photosystem II (PSII) cores with the light-harvesting antenna, regulates electron flow through the 2 photosystem reaction centers. PSII is a light-driven water plastoquinone oxidoreductase, using light energy to abstract electrons from H(2)O, generating a proton gradient subsequently used for ATP formation. The polypeptide is Photosystem II reaction center protein Z (Synechococcus elongatus (strain ATCC 33912 / PCC 7942 / FACHB-805) (Anacystis nidulans R2)).